The sequence spans 146 residues: Ribonuclease VapC41 (146 aa).

The PINc domain occupies L3 to R142. D5 and D112 together coordinate Mg(2+).

Belongs to the PINc/VapC protein family. It depends on Mg(2+) as a cofactor.

Its function is as follows. Toxic component of a type II toxin-antitoxin (TA) system. An RNase. Its toxic effect is neutralized by coexpression with cognate antitoxin VapB41. The protein is Ribonuclease VapC41 of Mycobacterium tuberculosis (strain CDC 1551 / Oshkosh).